A 107-amino-acid chain; its full sequence is MWILSNLMGTSEEGNLLSTVSPTVKALFGKTRVSPIFPFSPRSPFQPLIPRTPGSPWGPVGPASPLGPGFPIGPMGPGKPVGPKGPMLPLGPSGPVGPTSPLFPFCP.

The disordered stretch occupies residues 47–107 (PLIPRTPGSP…PTSPLFPFCP (61 aa)). Positions 81 to 100 (VGPKGPMLPLGPSGPVGPTS) are enriched in low complexity.

In terms of tissue distribution, expressed in prostate and testis. Weakly or not expressed in other tissues. Overexpressed in prostate cancers.

The protein resides in the cytoplasm. In terms of biological role, may be involved in growth and survival of prostate cancer cells through the TAF-Ibeta pathway. The polypeptide is Prostate collagen triple helix protein (PCOTH) (Homo sapiens (Human)).